Reading from the N-terminus, the 417-residue chain is uncharacterized protein (417 aa).

The chain crosses the membrane as a helical span at residues Ala10–Pro30. The disordered stretch occupies residues Gln84–Asn106. The segment covering Asn86–Asn106 has biased composition (polar residues). The helical transmembrane segment at Leu148–Val168 threads the bilayer.

The protein localises to the cell membrane. This is an uncharacterized protein from Methanocaldococcus jannaschii (strain ATCC 43067 / DSM 2661 / JAL-1 / JCM 10045 / NBRC 100440) (Methanococcus jannaschii).